A 273-amino-acid polypeptide reads, in one-letter code: Rhamnulose-1-phosphate aldolase (273 aa).

Glu-117 is an active-site residue. Positions 140, 142, and 211 each coordinate Zn(2+).

The protein belongs to the aldolase class II family. RhaD subfamily. Requires Zn(2+) as cofactor.

It is found in the cytoplasm. The catalysed reaction is L-rhamnulose 1-phosphate = (S)-lactaldehyde + dihydroxyacetone phosphate. Its pathway is carbohydrate degradation; L-rhamnose degradation; glycerone phosphate from L-rhamnose: step 3/3. Functionally, catalyzes the reversible cleavage of L-rhamnulose-1-phosphate to dihydroxyacetone phosphate (DHAP) and L-lactaldehyde. The protein is Rhamnulose-1-phosphate aldolase of Listeria innocua serovar 6a (strain ATCC BAA-680 / CLIP 11262).